The sequence spans 96 residues: NADH-ubiquinone oxidoreductase chain 4L (96 aa).

Transmembrane regions (helical) follow at residues 1–21 (MELM…ALSL), 27–47 (MLAL…LVMF), and 61–81 (IILL…VVAI).

Belongs to the complex I subunit 4L family.

Its subcellular location is the mitochondrion membrane. The enzyme catalyses a ubiquinone + NADH + 5 H(+)(in) = a ubiquinol + NAD(+) + 4 H(+)(out). Functionally, core subunit of the mitochondrial membrane respiratory chain NADH dehydrogenase (Complex I) which catalyzes electron transfer from NADH through the respiratory chain, using ubiquinone as an electron acceptor. Part of the enzyme membrane arm which is embedded in the lipid bilayer and involved in proton translocation. The sequence is that of NADH-ubiquinone oxidoreductase chain 4L (MT-ND4L) from Lycodon semicarinatus (Ryukyu odd-tooth snake).